The sequence spans 74 residues: Conotoxin VnMEKL-0221 (74 aa).

The signal sequence occupies residues 1–19; it reads MEKLTILLLVAAVLMWTQA. Positions 20–46 are excised as a propeptide; the sequence is LIQEKRPKEKIKFLSKRKTTAESWWEG. Intrachain disulfides connect Cys-48-Cys-62, Cys-55-Cys-66, and Cys-61-Cys-71.

This sequence belongs to the conotoxin O2 superfamily. As to expression, expressed by the venom duct.

It localises to the secreted. This Conus ventricosus (Mediterranean cone) protein is Conotoxin VnMEKL-0221.